We begin with the raw amino-acid sequence, 218 residues long: GTP cyclohydrolase 1 (218 aa).

Residues Cys-109, His-112, and Cys-180 each coordinate Zn(2+).

The protein belongs to the GTP cyclohydrolase I family. Toroid-shaped homodecamer, composed of two pentamers of five dimers.

The enzyme catalyses GTP + H2O = 7,8-dihydroneopterin 3'-triphosphate + formate + H(+). It functions in the pathway cofactor biosynthesis; 7,8-dihydroneopterin triphosphate biosynthesis; 7,8-dihydroneopterin triphosphate from GTP: step 1/1. In Pasteurella multocida (strain Pm70), this protein is GTP cyclohydrolase 1 (folE).